We begin with the raw amino-acid sequence, 201 residues long: Small ribosomal subunit protein uS4c (201 aa).

A disordered region spans residues glycine 20–tyrosine 44. The 62-residue stretch at methionine 89 to asparagine 150 folds into the S4 RNA-binding domain.

It belongs to the universal ribosomal protein uS4 family. In terms of assembly, part of the 30S ribosomal subunit. Contacts protein S5. The interaction surface between S4 and S5 is involved in control of translational fidelity.

It localises to the plastid. It is found in the chloroplast. One of the primary rRNA binding proteins, it binds directly to 16S rRNA where it nucleates assembly of the body of the 30S subunit. Functionally, with S5 and S12 plays an important role in translational accuracy. This chain is Small ribosomal subunit protein uS4c (rps4), found in Lotus japonicus (Lotus corniculatus var. japonicus).